The sequence spans 412 residues: CinA-like protein (412 aa).

It belongs to the CinA family.

The sequence is that of CinA-like protein from Syntrophotalea carbinolica (strain DSM 2380 / NBRC 103641 / GraBd1) (Pelobacter carbinolicus).